The sequence spans 341 residues: Tetraacyldisaccharide 4'-kinase (341 aa).

Residue Thr-54–Thr-61 coordinates ATP.

It belongs to the LpxK family.

The enzyme catalyses a lipid A disaccharide + ATP = a lipid IVA + ADP + H(+). It functions in the pathway glycolipid biosynthesis; lipid IV(A) biosynthesis; lipid IV(A) from (3R)-3-hydroxytetradecanoyl-[acyl-carrier-protein] and UDP-N-acetyl-alpha-D-glucosamine: step 6/6. Transfers the gamma-phosphate of ATP to the 4'-position of a tetraacyldisaccharide 1-phosphate intermediate (termed DS-1-P) to form tetraacyldisaccharide 1,4'-bis-phosphate (lipid IVA). In Brucella suis (strain ATCC 23445 / NCTC 10510), this protein is Tetraacyldisaccharide 4'-kinase.